The sequence spans 280 residues: Chlorophyll a-b binding protein CP29 (280 aa).

The tract at residues 1 to 42 (MVFKFPTPPGTQKKAGTTATKPAPKATTKKVATSTGTRSGGV) is disordered. Val2 is subject to N-acetylvaline. Phosphothreonine; in State 1 and State 2 is present on Thr7. Over residues 10-37 (GTQKKAGTTATKPAPKATTKKVATSTGT) the composition is skewed to low complexity. Position 17 is a phosphothreonine; in State 2 (Thr17). Phosphothreonine; in State 1 and State 2 is present on Thr33. Tyr47 is a chlorophyll b binding site. Residues Phe73 and Ser79 each contribute to the chlorophyll a site. The residue at position 103 (Ser103) is a Phosphoserine; in State 2. Chlorophyll a contacts are provided by Glu137 and His140. The next 2 helical transmembrane spans lie at 143-163 (WAML…VSWV) and 176-196 (AGLS…ILVG). Positions 183, 199, and 202 each coordinate chlorophyll b. Chlorophyll a-binding residues include Glu238, His241, Arg243, and Gln255. Residues 244–264 (LAMVSFFGYGVQALSTGEGAL) traverse the membrane as a helical segment.

Belongs to the light-harvesting chlorophyll a/b-binding (LHC) protein family. In terms of assembly, the LHC complex consists of chlorophyll a-b binding proteins. Binds at least 14 chlorophylls (8 Chl-a and 6 Chl-b) and carotenoids such as lutein and neoxanthin. is required as a cofactor. Post-translationally, reversible phosphorylation plays a role in the State transition process and determines the affinity of LHCII for PSI and PSII.

It is found in the plastid. The protein resides in the chloroplast thylakoid membrane. The light-harvesting complex (LHC) functions as a light receptor, it captures and delivers excitation energy to photosystems with which it is closely associated. CP29 facilitates the State 1 to State 2 transition, where State I is induced by excess photosystem I (PSI) light and State 2 is induced by excess photosystem II (PSII) light. This is Chlorophyll a-b binding protein CP29 from Chlamydomonas reinhardtii (Chlamydomonas smithii).